The sequence spans 503 residues: Alpha-1-syntrophin (503 aa).

2 consecutive PH domains span residues 6–263 (RAPR…AQIG) and 287–399 (DIKQ…DGCH). The disordered stretch occupies residues 40 to 68 (LTVSPADGEPGPEPEPAQLNGAAEPGAAP). A PDZ domain is found at 81 to 164 (RVTVRKADAG…EVVLEVKYMK (84 aa)). Residues serine 95, serine 178, serine 183, serine 187, and serine 194 each carry the phosphoserine modification. A disordered region spans residues 177–203 (TSVGWDSPPASPLQRQPSSPGPQPRNL). One can recognise an SU domain in the interval 447 to 503 (PFEKLQMSSDDGTSLLFLDFGGAEGEIQLDLHSCPKTMVFIIHSFLSAKVTRLGLLA). Residues 481-503 (PKTMVFIIHSFLSAKVTRLGLLA) are calmodulin-binding.

This sequence belongs to the syntrophin family. As to quaternary structure, monomer and homodimer. Interacts with MAPK12, TGFA, GA and F-actin. Interacts with the other members of the syntrophin family: SNTB1 and SNTB2; with dystrophin protein DMD and related proteins DTNA and UTRN; SGCG and SGCA of the dystrophin glycoprotein complex; NOS1; GRB2; calmodulin and the sodium channel proteins SCN4A and SCN5A. Interacts with MYOC; regulates muscle hypertrophy. Interacts with DTNB. Post-translationally, phosphorylated by CaM-kinase II. Phosphorylation may inhibit the interaction with DMD. In terms of tissue distribution, high expression in skeletal muscle. Expressed at intermediate level in heart, kidney and brain, and at low level in intestine, liver, lung and testis.

Its subcellular location is the cell membrane. The protein localises to the sarcolemma. It localises to the cell junction. It is found in the cytoplasm. The protein resides in the cytoskeleton. In terms of biological role, adapter protein that binds to and probably organizes the subcellular localization of a variety of membrane proteins. May link various receptors to the actin cytoskeleton and the extracellular matrix via the dystrophin glycoprotein complex. Plays an important role in synapse formation and in the organization of UTRN and acetylcholine receptors at the neuromuscular synapse. Binds to phosphatidylinositol 4,5-bisphosphate. The protein is Alpha-1-syntrophin (Snta1) of Mus musculus (Mouse).